A 322-amino-acid chain; its full sequence is tRNA N6-adenosine threonylcarbamoyltransferase (322 aa).

2 residues coordinate Fe cation: histidine 109 and histidine 113. Residues 131–135, aspartate 164, glycine 177, aspartate 181, and asparagine 277 contribute to the substrate site; that span reads LISGG. Residue aspartate 303 participates in Fe cation binding.

It belongs to the KAE1 / TsaD family. Requires Fe(2+) as cofactor.

The protein localises to the cytoplasm. The enzyme catalyses L-threonylcarbamoyladenylate + adenosine(37) in tRNA = N(6)-L-threonylcarbamoyladenosine(37) in tRNA + AMP + H(+). Its function is as follows. Required for the formation of a threonylcarbamoyl group on adenosine at position 37 (t(6)A37) in tRNAs that read codons beginning with adenine. Is involved in the transfer of the threonylcarbamoyl moiety of threonylcarbamoyl-AMP (TC-AMP) to the N6 group of A37, together with TsaE and TsaB. TsaD likely plays a direct catalytic role in this reaction. The protein is tRNA N6-adenosine threonylcarbamoyltransferase of Mesomycoplasma hyopneumoniae (strain 232) (Mycoplasma hyopneumoniae).